An 821-amino-acid polypeptide reads, in one-letter code: Ent-pimara-8(14),15-diene synthase (821 aa).

Residues D556, D560, N701, T705, and E709 each contribute to the Mg(2+) site. Residues 556–560 carry the DDXXD motif motif; that stretch reads DDFFD.

It belongs to the terpene synthase family. It depends on Mg(2+) as a cofactor. As to expression, highly expressed in roots, at intermediate levels in stems and at lower levels in leaves.

The enzyme catalyses ent-copalyl diphosphate = ent-pimara-8(14),15-diene + diphosphate. The protein operates within secondary metabolite biosynthesis; terpenoid biosynthesis. Involved in the biosynthesis of ent-kaurene diterpenoids natural products. Catalyzes the conversion of ent-copalyl diphosphate to ent-pimara-8(14),15-diene. The polypeptide is Ent-pimara-8(14),15-diene synthase (Oryza sativa subsp. japonica (Rice)).